The sequence spans 96 residues: MIGNQPNVNNLDVNLEELVLPVSLLADEELSPDGDPEEEEHYPYTIDTCCKPCGAGVRFTIIATPSAVITLRQLLLQEVFLTCLRCSRSLFRHGRS.

Residues 1–42 are E7 terminal domain; that stretch reads MIGNQPNVNNLDVNLEELVLPVSLLADEELSPDGDPEEEEHY. A zinc finger spans residues 50-86; it reads CKPCGAGVRFTIIATPSAVITLRQLLLQEVFLTCLRC. Positions 68 to 76 match the Nuclear export signal motif; sequence VITLRQLLL.

Belongs to the papillomaviridae E7 protein family. In terms of assembly, homodimer. Homooligomer. Interacts with host RB1; this interaction induces dissociation of RB1-E2F1 complex thereby disrupting RB1 activity. Interacts with host EP300; this interaction represses EP300 transcriptional activity. Interacts with protein E2; this interaction inhibits E7 oncogenic activity. Interacts with host TMEM173/STING; this interaction impairs the ability of TMEM173/STING to sense cytosolic DNA and promote the production of type I interferon (IFN-alpha and IFN-beta). In terms of processing, highly phosphorylated.

The protein resides in the host cytoplasm. The protein localises to the host nucleus. Functionally, plays a role in viral genome replication by driving entry of quiescent cells into the cell cycle. Stimulation of progression from G1 to S phase allows the virus to efficiently use the cellular DNA replicating machinery to achieve viral genome replication. E7 protein has both transforming and trans-activating activities. Induces the disassembly of the E2F1 transcription factor from RB1, with subsequent transcriptional activation of E2F1-regulated S-phase genes. Interferes with host histone deacetylation mediated by HDAC1 and HDAC2, leading to transcription activation. Also plays a role in the inhibition of both antiviral and antiproliferative functions of host interferon alpha. Interaction with host TMEM173/STING impairs the ability of TMEM173/STING to sense cytosolic DNA and promote the production of type I interferon (IFN-alpha and IFN-beta). This is Protein E7 from Homo sapiens (Human).